Reading from the N-terminus, the 371-residue chain is MSDNSQKKVIVGMSGGVDSSVSAYLLQQQGYQVAGLFMKNWEEDDDEEYCSAATDLADAQAVCDKLGMELHTVNFAAEYWDNVFELFLAEYKAGRTPNPDILCNKEIKFKAFLEFAAEDLGADYIATGHYVRRQDVDGKSRLLRGLDGNKDQSYFLYTLSHEQIAQSLFPVGELEKPEVRRIAEQLDLVTAKKKDSTGICFIGERKFRDFLGRYLPAQPGPIMTVDGQLVGKHQGLMYHTLGQRKGLGIGGTKEGGDDPWYVVDKDLDSNTLLVAQGHEHPRLMSVGLVAQQLHWVDRQPVTAPFRCVVKTRYRQQDIPCTVTPLDDERVDVRFDDPVAAVTPGQSAVFYQGEICLGGGIIEQRYPLTIPA.

ATP-binding positions include 12–19 (GMSGGVDS) and Met-38. The interval 98–100 (NPD) is interaction with target base in tRNA. The active-site Nucleophile is Cys-103. Cys-103 and Cys-200 are joined by a disulfide. Gly-128 is an ATP binding site. The segment at 150–152 (KDQ) is interaction with tRNA. The Cysteine persulfide intermediate role is filled by Cys-200. An interaction with tRNA region spans residues 312–313 (RY).

It belongs to the MnmA/TRMU family. In terms of assembly, interacts with TusE.

The protein localises to the cytoplasm. It carries out the reaction S-sulfanyl-L-cysteinyl-[protein] + uridine(34) in tRNA + AH2 + ATP = 2-thiouridine(34) in tRNA + L-cysteinyl-[protein] + A + AMP + diphosphate + H(+). Functionally, catalyzes the 2-thiolation of uridine at the wobble position (U34) of tRNA(Lys), tRNA(Glu) and tRNA(Gln), leading to the formation of s(2)U34, the first step of tRNA-mnm(5)s(2)U34 synthesis. Sulfur is provided by IscS, via a sulfur-relay system. Binds ATP and its substrate tRNAs. This Yersinia pseudotuberculosis serotype O:1b (strain IP 31758) protein is tRNA-specific 2-thiouridylase MnmA.